A 64-amino-acid polypeptide reads, in one-letter code: Small ribosomal subunit protein bS18c (64 aa).

Belongs to the bacterial ribosomal protein bS18 family. As to quaternary structure, part of the 30S ribosomal subunit.

The protein localises to the plastid. It is found in the chloroplast. The polypeptide is Small ribosomal subunit protein bS18c (rps18) (Bigelowiella natans (Pedinomonas minutissima)).